The chain runs to 500 residues: Putative (R)-citramalate synthase CimA (500 aa).

The region spanning 9-258 (LRFFDTTLRD…DTRIRTERLY (250 aa)) is the Pyruvate carboxyltransferase domain.

The protein belongs to the alpha-IPM synthase/homocitrate synthase family. As to quaternary structure, homodimer.

It catalyses the reaction pyruvate + acetyl-CoA + H2O = (3R)-citramalate + CoA + H(+). The protein operates within amino-acid biosynthesis; L-isoleucine biosynthesis; 2-oxobutanoate from pyruvate: step 1/3. Catalyzes the condensation of pyruvate and acetyl-coenzyme A to form (R)-citramalate. In Methanosphaerula palustris (strain ATCC BAA-1556 / DSM 19958 / E1-9c), this protein is Putative (R)-citramalate synthase CimA.